The chain runs to 360 residues: UDP-N-acetylglucosamine--N-acetylmuramyl-(pentapeptide) pyrophosphoryl-undecaprenol N-acetylglucosamine transferase (360 aa).

UDP-N-acetyl-alpha-D-glucosamine-binding positions include 12-14, S198, and Q289; that span reads TAG.

Belongs to the glycosyltransferase 28 family. MurG subfamily.

Its subcellular location is the cell membrane. The catalysed reaction is Mur2Ac(oyl-L-Ala-gamma-D-Glu-L-Lys-D-Ala-D-Ala)-di-trans,octa-cis-undecaprenyl diphosphate + UDP-N-acetyl-alpha-D-glucosamine = beta-D-GlcNAc-(1-&gt;4)-Mur2Ac(oyl-L-Ala-gamma-D-Glu-L-Lys-D-Ala-D-Ala)-di-trans,octa-cis-undecaprenyl diphosphate + UDP + H(+). The protein operates within cell wall biogenesis; peptidoglycan biosynthesis. Cell wall formation. Catalyzes the transfer of a GlcNAc subunit on undecaprenyl-pyrophosphoryl-MurNAc-pentapeptide (lipid intermediate I) to form undecaprenyl-pyrophosphoryl-MurNAc-(pentapeptide)GlcNAc (lipid intermediate II). The sequence is that of UDP-N-acetylglucosamine--N-acetylmuramyl-(pentapeptide) pyrophosphoryl-undecaprenol N-acetylglucosamine transferase from Streptococcus equi subsp. equi (strain 4047).